The primary structure comprises 185 residues: Shikimate kinase (185 aa).

12–17 (GSGKTT) contributes to the ATP binding site. Threonine 16 is a Mg(2+) binding site. Positions 34, 58, and 79 each coordinate substrate. Arginine 116 lines the ATP pocket. Arginine 135 contacts substrate.

This sequence belongs to the shikimate kinase family. Monomer. Requires Mg(2+) as cofactor.

It is found in the cytoplasm. The enzyme catalyses shikimate + ATP = 3-phosphoshikimate + ADP + H(+). The protein operates within metabolic intermediate biosynthesis; chorismate biosynthesis; chorismate from D-erythrose 4-phosphate and phosphoenolpyruvate: step 5/7. Functionally, catalyzes the specific phosphorylation of the 3-hydroxyl group of shikimic acid using ATP as a cosubstrate. The chain is Shikimate kinase from Corynebacterium jeikeium (strain K411).